The primary structure comprises 335 residues: Anthranilate phosphoribosyltransferase (335 aa).

Residues glycine 79, 82–83, threonine 87, 89–92, 107–115, and serine 119 each bind 5-phospho-alpha-D-ribose 1-diphosphate; these read GD, NVST, and KHGSRSVSS. Glycine 79 contacts anthranilate. Residue serine 91 participates in Mg(2+) binding. Anthranilate is bound at residue arginine 165. Positions 223 and 224 each coordinate Mg(2+).

This sequence belongs to the anthranilate phosphoribosyltransferase family. In terms of assembly, homodimer. Mg(2+) serves as cofactor.

The catalysed reaction is N-(5-phospho-beta-D-ribosyl)anthranilate + diphosphate = 5-phospho-alpha-D-ribose 1-diphosphate + anthranilate. It participates in amino-acid biosynthesis; L-tryptophan biosynthesis; L-tryptophan from chorismate: step 2/5. In terms of biological role, catalyzes the transfer of the phosphoribosyl group of 5-phosphorylribose-1-pyrophosphate (PRPP) to anthranilate to yield N-(5'-phosphoribosyl)-anthranilate (PRA). The chain is Anthranilate phosphoribosyltransferase from Helicobacter pylori (strain HPAG1).